Here is a 282-residue protein sequence, read N- to C-terminus: TPR repeat protein oca3 (282 aa).

TPR repeat units follow at residues 16 to 50 (IVALFSQQEAYAKLGKYKDEIWDVYQKVFIAALTT), 71 to 104 (PRVEGLYGMFLEATASEKDAMSYYNSKLSEDPTH), 139 to 172 (LEAWAELADIYVSVEAFESAIFCYEEMVLLQPFE), and 174 to 211 (RLFARLGDLYFVLAQSNATNYWFSLKHYCRSVEICEEY).

The protein resides in the cytoplasm. It localises to the nucleus. Its function is as follows. May be involved in cell cycle regulation. This chain is TPR repeat protein oca3 (oca3), found in Schizosaccharomyces pombe (strain 972 / ATCC 24843) (Fission yeast).